We begin with the raw amino-acid sequence, 469 residues long: Probable Xaa-Pro aminopeptidase PEPP (469 aa).

Mn(2+) is bound by residues aspartate 265, aspartate 276, glutamate 399, and glutamate 439.

This sequence belongs to the peptidase M24B family. Mn(2+) serves as cofactor.

It catalyses the reaction Release of any N-terminal amino acid, including proline, that is linked to proline, even from a dipeptide or tripeptide.. Its function is as follows. Catalyzes the removal of a penultimate prolyl residue from the N-termini of peptides. The protein is Probable Xaa-Pro aminopeptidase PEPP (PEPP) of Coccidioides posadasii (strain C735) (Valley fever fungus).